Here is a 217-residue protein sequence, read N- to C-terminus: tRNA (guanine-N(7)-)-methyltransferase (217 aa).

Residues Glu44, Glu69, Asn96, and Asp118 each contribute to the S-adenosyl-L-methionine site. The active site involves Asp118. Lys122 is a substrate binding site. An interaction with RNA region spans residues 124–129; that stretch reads RHEKRR. Substrate contacts are provided by residues Asp154 and 191–194; that span reads TEYE.

It belongs to the class I-like SAM-binding methyltransferase superfamily. TrmB family.

It carries out the reaction guanosine(46) in tRNA + S-adenosyl-L-methionine = N(7)-methylguanosine(46) in tRNA + S-adenosyl-L-homocysteine. Its pathway is tRNA modification; N(7)-methylguanine-tRNA biosynthesis. Catalyzes the formation of N(7)-methylguanine at position 46 (m7G46) in tRNA. This is tRNA (guanine-N(7)-)-methyltransferase from Geobacillus kaustophilus (strain HTA426).